A 398-amino-acid polypeptide reads, in one-letter code: Beta-1,4-galactosyltransferase 1 (398 aa).

Residues 1-24 (MRLREPLLSGSAAMPGASLQRACR) are Cytoplasmic-facing. Residues 25–44 (LLVAVCALHLGVTLVYYLAG) traverse the membrane as a helical; Signal-anchor for type II membrane protein segment. The Lumenal portion of the chain corresponds to 45–398 (RDLSRLPQLV…QITVDIGTPS (354 aa)). Over residues 61–76 (QGGSNSAAAIGQSSGE) the composition is skewed to polar residues. Residues 61–117 (QGGSNSAAAIGQSSGELRTGGARPPPPLGASSQPRPGGDSSPVVDSGPGPASNLTSV) are disordered. A glycan (N-linked (GlcNAc...) asparagine) is linked at Asn113. A disulfide bridge links Cys130 with Cys172. Residues 183–187 (PFRNR), 222–224 (FNR), 249–250 (VD), and Trp310 each bind UDP-alpha-D-galactose. An intrachain disulfide couples Cys243 to Cys262. Asp250 provides a ligand contact to Mn(2+). An N-acetyl-D-glucosamine-binding site is contributed by 312–315 (GEDD). Residue His343 participates in Mn(2+) binding. Position 343 to 346 (343 to 346 (HSRD)) interacts with UDP-alpha-D-galactose. Arg355 contacts N-acetyl-D-glucosamine.

The protein belongs to the glycosyltransferase 7 family. In terms of assembly, homodimer; and heterodimer with alpha-lactalbumin to form lactose synthase. Interacts (via N-terminal cytoplasmic domain) with UBE2Q1 (via N-terminus); the interaction is direct. Mn(2+) serves as cofactor. In terms of processing, the soluble form derives from the membrane forms by proteolytic processing. Ubiquitously expressed, but at very low levels in fetal and adult brain.

Its subcellular location is the golgi apparatus. The protein resides in the golgi stack membrane. It is found in the cell membrane. The protein localises to the cell surface. It localises to the cell projection. Its subcellular location is the filopodium. The protein resides in the secreted. It catalyses the reaction D-glucose + UDP-alpha-D-galactose = lactose + UDP + H(+). It carries out the reaction an N-acetyl-beta-D-glucosaminyl derivative + UDP-alpha-D-galactose = a beta-D-galactosyl-(1-&gt;4)-N-acetyl-beta-D-glucosaminyl derivative + UDP + H(+). The enzyme catalyses N-acetyl-D-glucosamine + UDP-alpha-D-galactose = beta-D-galactosyl-(1-&gt;4)-N-acetyl-D-glucosamine + UDP + H(+). The catalysed reaction is a beta-D-GlcNAc-(1-&gt;3)-beta-D-Gal-(1-&gt;4)-beta-D-Glc-(1&lt;-&gt;1)-Cer(d18:1(4E)) + UDP-alpha-D-galactose = a neolactoside nLc4Cer(d18:1(4E)) + UDP + H(+). It catalyses the reaction a beta-D-glucosylceramide + UDP-alpha-D-galactose = a beta-D-galactosyl-(1-&gt;4)-beta-D-glucosyl-(1&lt;-&gt;1)-ceramide + UDP + H(+). It carries out the reaction a neolactoside IV(3)-beta-GlcNAc-nLc4Cer + UDP-alpha-D-galactose = a neolactoside nLc6Cer + UDP + H(+). It participates in protein modification; protein glycosylation. The Golgi complex form catalyzes the production of lactose in the lactating mammary gland and could also be responsible for the synthesis of complex-type N-linked oligosaccharides in many glycoproteins as well as the carbohydrate moieties of glycolipids. Its function is as follows. The cell surface form functions as a recognition molecule during a variety of cell to cell and cell to matrix interactions, as those occurring during development and egg fertilization, by binding to specific oligosaccharide ligands on opposing cells or in the extracellular matrix. The sequence is that of Beta-1,4-galactosyltransferase 1 from Homo sapiens (Human).